The following is a 746-amino-acid chain: Polyribonucleotide nucleotidyltransferase (746 aa).

Positions 515 and 521 each coordinate Mg(2+). One can recognise a KH domain in the interval 581-640 (PRVIAVKIPVDKIGEVIGPKGKMINQIQEDTGADISIEDDGTVYIGATNGPSADAARSAI). An S1 motif domain is found at 652–724 (GERYLGTVVK…DRGKLSLSPV (73 aa)).

Belongs to the polyribonucleotide nucleotidyltransferase family. Requires Mg(2+) as cofactor.

The protein localises to the cytoplasm. It catalyses the reaction RNA(n+1) + phosphate = RNA(n) + a ribonucleoside 5'-diphosphate. In terms of biological role, involved in mRNA degradation. Catalyzes the phosphorolysis of single-stranded polyribonucleotides processively in the 3'- to 5'-direction. This chain is Polyribonucleotide nucleotidyltransferase, found in Renibacterium salmoninarum (strain ATCC 33209 / DSM 20767 / JCM 11484 / NBRC 15589 / NCIMB 2235).